The chain runs to 80 residues: MAEIIPMTEEQKFQLEIYKLVMNQNAAAEEAFQFIGTDELKLELFKIHFQSGGANSDITTRTIEAVRKSREALDLFTTGA.

This is an uncharacterized protein from Salmonella phage P22 (Bacteriophage P22).